Here is a 241-residue protein sequence, read N- to C-terminus: Glutathione S-transferase omega-1 (241 aa).

Serine 2 bears the N-acetylserine mark. The GST N-terminal domain maps to glycine 22–lysine 101. Cysteine 32 acts as the Nucleophile in catalysis. The residue at position 57 (lysine 57) is an N6-acetyllysine. Glutathione is bound by residues lysine 59, valine 72, and glutamate 85 to serine 86. The GST C-terminal domain maps to aspartate 106–leucine 230. Serine 129 is modified (phosphoserine). 3 positions are modified to N6-acetyllysine: lysine 143, lysine 148, and lysine 152.

This sequence belongs to the GST superfamily. Omega family. In terms of assembly, homodimer. Ubiquitous. Highest expression in liver, pancreas, skeletal muscle, spleen, thymus, colon, blood leukocyte and heart. Lowest expression in brain, placenta and lung.

Its subcellular location is the cytoplasm. It is found in the cytosol. The enzyme catalyses RX + glutathione = an S-substituted glutathione + a halide anion + H(+). It carries out the reaction L-dehydroascorbate + 2 glutathione = glutathione disulfide + L-ascorbate. The catalysed reaction is methylarsonate + 2 glutathione + H(+) = methylarsonous acid + glutathione disulfide + H2O. With respect to regulation, monomethylarsonic acid reductase activity is competitively inhibited by 1-chloro 2,4-dinitrobenzene (CDNB) and by deoxycholate. Its function is as follows. Exhibits glutathione-dependent thiol transferase and dehydroascorbate reductase activities. Has S-(phenacyl)glutathione reductase activity. Also has glutathione S-transferase activity. Participates in the biotransformation of inorganic arsenic and reduces monomethylarsonic acid (MMA) and dimethylarsonic acid. In Homo sapiens (Human), this protein is Glutathione S-transferase omega-1 (GSTO1).